Consider the following 383-residue polypeptide: GDSL esterase/lipase At1g28610 (383 aa).

The N-terminal stretch at Met-1–Ser-22 is a signal peptide. Ser-38 functions as the Nucleophile in the catalytic mechanism. N-linked (GlcNAc...) asparagine glycosylation is found at Asn-134, Asn-184, and Asn-315. Residues Asp-340 and His-343 contribute to the active site.

Belongs to the 'GDSL' lipolytic enzyme family.

Its subcellular location is the secreted. The protein is GDSL esterase/lipase At1g28610 of Arabidopsis thaliana (Mouse-ear cress).